The following is a 382-amino-acid chain: UDP-N-acetylenolpyruvoylglucosamine reductase (382 aa).

The FAD-binding PCMH-type domain maps to 50 to 253 (RVGGPAVLAE…REAVLRLRAS (204 aa)). The active site involves R193. S270 (proton donor) is an active-site residue. Residue E374 is part of the active site.

The protein belongs to the MurB family. FAD serves as cofactor.

It localises to the cytoplasm. It carries out the reaction UDP-N-acetyl-alpha-D-muramate + NADP(+) = UDP-N-acetyl-3-O-(1-carboxyvinyl)-alpha-D-glucosamine + NADPH + H(+). The protein operates within cell wall biogenesis; peptidoglycan biosynthesis. Cell wall formation. This Nocardia farcinica (strain IFM 10152) protein is UDP-N-acetylenolpyruvoylglucosamine reductase.